A 62-amino-acid chain; its full sequence is Large ribosomal subunit protein bL28 (62 aa).

A disordered region spans residues 1-28 (MARVCTITGRKARSGNSRSHAMNATKRK).

It belongs to the bacterial ribosomal protein bL28 family.

The protein is Large ribosomal subunit protein bL28 of Bacillus anthracis (strain CDC 684 / NRRL 3495).